A 555-amino-acid polypeptide reads, in one-letter code: Ribonuclease J2 (555 aa).

Residues His-74, His-76, His-142, and Asp-164 each contribute to the Zn(2+) site. A substrate-binding site is contributed by 364-368 (HVSGH).

The protein belongs to the metallo-beta-lactamase superfamily. RNA-metabolizing metallo-beta-lactamase-like family. Bacterial RNase J subfamily. In terms of assembly, unclear whether it forms homodimers or belongs to a larger complex. According to probably does not form homodimers, while shows homodimer formation. Both reports show RNase J1 and J2 interaction, probably as a heterotetramer shows it is a component of a possible RNA degradosome complex composed of rny, rnjA, rnjB, pnp, pfkA and eno, while finds no evidence of an RNA degradosome complex. It depends on Zn(2+) as a cofactor.

It localises to the cytoplasm. Endonucleolytically cleaves the 5'-leader sequence of certain mRNAs. Endonuclease digestion by the RNase J1/J2 complex occurs at a different site and in some cases more efficiently than J1 or J2 alone. The exonuclease activity of the J1/J2 complex is highly processive on substrates longer than 5 nucleotides, on shorter substrates is distributive. Plays a role in mRNA maturation and stability. Appears to have a limited effect on 16S rRNA maturation, despite its similarity to RNase J1. This subunit alone has very poor 5'-3' exonuclease activity. This is Ribonuclease J2 from Bacillus subtilis (strain 168).